Here is a 250-residue protein sequence, read N- to C-terminus: 5'-nucleotidase SurE (250 aa).

A divalent metal cation-binding residues include Asp8, Asp9, Ser40, and Asn92.

Belongs to the SurE nucleotidase family. A divalent metal cation is required as a cofactor.

Its subcellular location is the cytoplasm. It catalyses the reaction a ribonucleoside 5'-phosphate + H2O = a ribonucleoside + phosphate. Functionally, nucleotidase that shows phosphatase activity on nucleoside 5'-monophosphates. This chain is 5'-nucleotidase SurE, found in Dichelobacter nodosus (strain VCS1703A).